The primary structure comprises 79 residues: Sulfur carrier protein TusA (79 aa).

Cys-17 functions as the Cysteine persulfide intermediate in the catalytic mechanism.

Belongs to the sulfur carrier protein TusA family.

The protein resides in the cytoplasm. Functionally, sulfur carrier protein which probably makes part of a sulfur-relay system. This chain is Sulfur carrier protein TusA, found in Actinobacillus pleuropneumoniae serotype 7 (strain AP76).